A 150-amino-acid chain; its full sequence is Endoribonuclease YbeY (150 aa).

Residues His102, His106, and His112 each contribute to the Zn(2+) site.

It belongs to the endoribonuclease YbeY family. Zn(2+) serves as cofactor.

The protein localises to the cytoplasm. Single strand-specific metallo-endoribonuclease involved in late-stage 70S ribosome quality control and in maturation of the 3' terminus of the 16S rRNA. This Thermotoga maritima (strain ATCC 43589 / DSM 3109 / JCM 10099 / NBRC 100826 / MSB8) protein is Endoribonuclease YbeY.